The sequence spans 585 residues: Putative ABC transporter ATP-binding protein MG187 (585 aa).

The ABC transporter domain occupies 8-468; the sequence is IELKNIVVDF…PANEFVARFL (461 aa). Residue 40 to 47 coordinates ATP; that stretch reads GPSGCGKT.

This sequence belongs to the ABC transporter superfamily.

The sequence is that of Putative ABC transporter ATP-binding protein MG187 from Mycoplasma genitalium (strain ATCC 33530 / DSM 19775 / NCTC 10195 / G37) (Mycoplasmoides genitalium).